Consider the following 130-residue polypeptide: Protein BLT4 (130 aa).

The first 25 residues, 1–25 (MARTAATKLALVPLVAAMLLVAADA), serve as a signal peptide directing secretion. The segment at 80–130 (VPARTTPAGPQASPPGAASASPTRSAPVSTALRSTDRTRAPHISSDRRLVG) is disordered. The span at 84 to 110 (TTPAGPQASPPGAASASPTRSAPVSTA) shows a compositional bias: low complexity. Residues 113 to 130 (STDRTRAPHISSDRRLVG) show a composition bias toward basic and acidic residues.

It belongs to the plant LTP family. As to expression, shoot meristem.

Functionally, possible dehydrative stress responsive protein. Not shown to have lipid transfer activity. This is Protein BLT4 (BLT4) from Hordeum vulgare (Barley).